Reading from the N-terminus, the 436-residue chain is GTPase Der (436 aa).

2 consecutive EngA-type G domains span residues 4–167 (PVVA…PKDH) and 176–351 (IKFC…DNHA). Residues 10–17 (GRPNVGKS), 57–61 (DTGGI), 119–122 (NKID), 182–189 (GRPNVGKS), 229–233 (DTAGM), and 294–297 (NKWD) each bind GTP. A KH-like domain is found at 352-436 (MRVQTNVLNE…PIKIIARPRK (85 aa)).

It belongs to the TRAFAC class TrmE-Era-EngA-EngB-Septin-like GTPase superfamily. EngA (Der) GTPase family. Associates with the 50S ribosomal subunit.

Its function is as follows. GTPase that plays an essential role in the late steps of ribosome biogenesis. The chain is GTPase Der from Geobacillus thermodenitrificans (strain NG80-2).